Here is a 562-residue protein sequence, read N- to C-terminus: Protein wntless (562 aa).

Over 1–13 the chain is Cytoplasmic; sequence MSGTILENLSGRK. A helical membrane pass occupies residues 14-34; the sequence is LSILVGSLLLCQVLCFLLGGL. Over 35 to 239 the chain is Lumenal; that stretch reads YAPVPAGHTN…AIHQNGGFTH (205 aa). N-linked (GlcNAc...) asparagine glycosylation occurs at N58. The chain crosses the membrane as a helical span at residues 240-260; the sequence is VWLMLKTLLFPFVVGIMVWFW. Residues 261-270 lie on the Cytoplasmic side of the membrane; it reads RRVHLLQRSP. A helical membrane pass occupies residues 271–291; that stretch reads ALLEYMLLYLGGALTFLNLPL. Residues 292–311 lie on the Lumenal side of the membrane; the sequence is EYLSLTIEMPYMLLLSDIRQ. A helical membrane pass occupies residues 312–332; that stretch reads GIFYAMLLSFWLVFAGEHMLI. Topologically, residues 333–344 are cytoplasmic; sequence QDSHNKSTIRSR. Residues 345 to 365 form a helical membrane-spanning segment; it reads YWKHLSAVVVGCISLFVFDIS. Residues 366–386 lie on the Lumenal side of the membrane; sequence ERGVQLRNPFYSIWTTPLGAK. A helical membrane pass occupies residues 387–407; sequence VAMSFILLAGVSAAVYFLFLC. The Cytoplasmic portion of the chain corresponds to 408–441; sequence YMISKVFKNIGDKRTSLPSMSQARRLHYEGLIYR. A helical membrane pass occupies residues 442 to 462; the sequence is FKFLMLATLLCAALTVTGFIM. Residues 463-482 lie on the Lumenal side of the membrane; that stretch reads GQMAEGQWKWNDDVEIQLTS. A helical transmembrane segment spans residues 483-503; sequence AFLTGVYGMWNIYIFALLILY. Residues 504–562 lie on the Cytoplasmic side of the membrane; the sequence is APSHKQWPTMHHSDETTQSNENIVASAASEEIEFSNLPSDSNPSEISSLTSFTRKVAFE. The segment at 538-562 is disordered; sequence SNLPSDSNPSEISSLTSFTRKVAFE. A compositionally biased stretch (polar residues) spans 539-556; the sequence is NLPSDSNPSEISSLTSFT.

Belongs to the wntless family. As to quaternary structure, interacts with wg; in the Golgi. Interacts with Vps35, a component of the retromer complex; wls stability is regulated by Vps35.

It localises to the presynaptic cell membrane. The protein resides in the postsynaptic cell membrane. Its subcellular location is the cell membrane. The protein localises to the endoplasmic reticulum membrane. It is found in the endosome membrane. It localises to the golgi apparatus membrane. A segment polarity gene required for wingless (wg)-dependent patterning processes, acting in both wg-sending cells and wg-target cells. In non-neuronal cells wls directs wg secretion. The wls traffic loop encompasses the Golgi, the cell surface, an endocytic compartment and a retrograde route leading back to the Golgi, and involves clathrin-mediated endocytosis and the retromer complex (a conserved protein complex consisting of Vps35 and Vps26). In neuronal cells (the larval motorneuron NMJ), the wg signal moves across the synapse via the release of wls-containing exosome-like vesicles. Postsynaptic wls is required for the trafficking of fz2 through the fz2-interacting protein Grip. This chain is Protein wntless, found in Drosophila persimilis (Fruit fly).